The following is a 336-amino-acid chain: Dihydroorotate dehydrogenase (quinone) (336 aa).

FMN contacts are provided by residues 62–66 (AGLDK) and Thr-86. Lys-66 contributes to the substrate binding site. 111 to 115 (NRMGF) contacts substrate. FMN is bound by residues Asn-139 and Asn-172. A substrate-binding site is contributed by Asn-172. The active-site Nucleophile is the Ser-175. Asn-177 is a binding site for substrate. The FMN site is built by Lys-217 and Thr-245. Residue 246–247 (NT) participates in substrate binding. FMN contacts are provided by residues Gly-268, Gly-297, and 318-319 (YS).

The protein belongs to the dihydroorotate dehydrogenase family. Type 2 subfamily. In terms of assembly, monomer. FMN serves as cofactor.

Its subcellular location is the cell membrane. The catalysed reaction is (S)-dihydroorotate + a quinone = orotate + a quinol. It participates in pyrimidine metabolism; UMP biosynthesis via de novo pathway; orotate from (S)-dihydroorotate (quinone route): step 1/1. Functionally, catalyzes the conversion of dihydroorotate to orotate with quinone as electron acceptor. In Aliivibrio fischeri (strain ATCC 700601 / ES114) (Vibrio fischeri), this protein is Dihydroorotate dehydrogenase (quinone).